A 312-amino-acid chain; its full sequence is Olfactory receptor 2M5 (312 aa).

The Extracellular segment spans residues 1–25 (MAWENQTFNSDFILLGIFNHSPTHT). The N-linked (GlcNAc...) asparagine glycan is linked to N5. Residues 26–49 (FLFFLVLAIFSVAFMGNSVMVLLI) traverse the membrane as a helical segment. At 50 to 57 (YLDTQLHT) the chain is on the cytoplasmic side. The helical transmembrane segment at 58–79 (PMYFLLSQLFLMDLMLICSTVP) threads the bilayer. At 80–100 (KMAFNYLSGSKSISMAGCATQ) the chain is on the extracellular side. A disulfide bond links C97 and C189. A helical transmembrane segment spans residues 101–120 (IFFYVSLLGSECFLLAVMSY). Residues 121–139 (DRYIAICHPLRYTNLMRPK) are Cytoplasmic-facing. The chain crosses the membrane as a helical span at residues 140–158 (ICGLMTAFSWILGSMDAII). The Extracellular segment spans residues 159–195 (DAVATFSFSYCGSREIAHFFCDFPSLLILSCNDTSIF). Residues 196–219 (EKVLFICCIVMIVFPVAIIIASYA) form a helical membrane-spanning segment. Residues 220 to 236 (RVILAVIHMGSGEGRRK) lie on the Cytoplasmic side of the membrane. The chain crosses the membrane as a helical span at residues 237 to 259 (AFTTCSSHLMVVGMYYGAGLFMY). At 260–272 (IRPTSDRSPMQDK) the chain is on the extracellular side. The chain crosses the membrane as a helical span at residues 273-292 (LVSVFYTILTPMLNPLIYSL). Residues 293 to 311 (RNKEVTRALRKVLGKGKCG) are Cytoplasmic-facing.

Belongs to the G-protein coupled receptor 1 family.

It localises to the cell membrane. Functionally, odorant receptor. This is Olfactory receptor 2M5 (OR2M5) from Homo sapiens (Human).